Reading from the N-terminus, the 1060-residue chain is MNDENRFNVSAVEGESKKNGIHMGANIITRPLRSSVENVERGVAPNSQSEGWHHESGWKRRRSLAQLTREALPRMENYRNSKRALKRPSLGELHGDHLITEEDEKDQNHRDTKSPTPAVGIKLGWIQGVFIPCLLNIWGVMLFLRLSWVVSQAGIGLSLVIIAISAIVCVITTLSMSAICTNGEVKGGGIYYIISRSLGPEFGASVGIIFAFANAVAASMNTIGFCDSLNDLLRSNGLKITEDPINDVRIVGTVALLVMCIICAIGMDWESKAQNFLIAIIVGAMVDFVVGTIMGPKDNSEIAKGFVGLSSATFVENFKSDFRFSEKLDQNFFSVFAIFFPSVTGIQAGANISGDLKDPASAIPKGTLLALLISMVSYTLMVLFAGGGALRDASGNITDLLIVNGTVTDYSSVSLCALNNTCEYGLHNSYSVMQLMSAWGPFIYGGCWAATLSTALTNLLSVPRLIQALGVDRIYPGLIFFSKPYGRHGEPYRGYVLTFFVSLLFLLIADLNTIAPLISNFYLASYALINFCTFHRALVRPLGWRPTFRYYNMWLSLAGFLMCVAIMLLVHWVMSLVTFAIFFTLYLIVHYRRPDVNWGSSTQAQMYKTALSSAHALARTGEHVKNYWPQLLVLAGRPQARPALVDLGNLISKAGSLMIVGDISQEKLSYKVRSARARSDDEWLRGRKVRAFCSRVHGFSFEPGARALVQGSGVGRLAPNVLLMGYKSDWTTCPANDLVSYFNVLHTAFENRLAVAIVRVSGGLDYSAVVSEGAEEGAAGSLTATSSSGELRVRRDGLIMHADSDLDIRDTQPKHNLSNLLTLTTSRSFTISECKEKDKKKKERKPNDMHRQIVYNTASGLELSKFQLAQMSLFQKKQESGTLDVWWLYDDGGLTILLPYIISQRSAWANCKLRIFALANRLHEMELEERNMANLLAKFRIDYSSLTMVQDITDPPQPETKALFDETIKKFTEESASPDCRISDMELQTLAVKTNRQLRLRELLLANSKDARLVVMSLPMPRKGSISAPLYMAWLEMMSRDLPPMLFVRGNHTSVLTFYS.

The Cytoplasmic segment spans residues 1–122 (MNDENRFNVS…KSPTPAVGIK (122 aa)). Transmembrane regions (helical) follow at residues 123–143 (LGWI…VMLF) and 154–174 (GIGL…ITTL). At 175 to 197 (SMSAICTNGEVKGGGIYYIISRS) the chain is on the cytoplasmic side. 2 helical membrane-spanning segments follow: residues 198–218 (LGPE…AVAA) and 250–270 (IVGT…MDWE). The Cytoplasmic segment spans residues 271–275 (SKAQN). 2 helical membrane-spanning segments follow: residues 276-296 (FLIA…IMGP) and 332-352 (FFSV…GANI). Topologically, residues 353 to 367 (SGDLKDPASAIPKGT) are cytoplasmic. A helical transmembrane segment spans residues 368 to 388 (LLALLISMVSYTLMVLFAGGG). Residues asparagine 396, asparagine 404, and asparagine 419 are each glycosylated (N-linked (GlcNAc...) asparagine). Residues 432–452 (VMQLMSAWGPFIYGGCWAATL) traverse the membrane as a helical segment. Residues 453-497 (STALTNLLSVPRLIQALGVDRIYPGLIFFSKPYGRHGEPYRGYVL) lie on the Cytoplasmic side of the membrane. 2 helical membrane passes run 498-518 (TFFV…APLI) and 563-583 (CVAI…AIFF). Topologically, residues 584-642 (TLYLIVHYRRPDVNWGSSTQAQMYKTALSSAHALARTGEHVKNYWPQLLVLAGRPQARP) are cytoplasmic. A helical membrane pass occupies residues 643–663 (ALVDLGNLISKAGSLMIVGDI). Asparagine 816 carries an N-linked (GlcNAc...) asparagine glycan. A helical membrane pass occupies residues 882 to 902 (TLDVWWLYDDGGLTILLPYII). The Cytoplasmic segment spans residues 903 to 1060 (SQRSAWANCK…NHTSVLTFYS (158 aa)).

The protein belongs to the SLC12A transporter family.

It localises to the membrane. Functionally, electrically silent transporter system. Mediates sodium and chloride reabsorption. Plays a vital role in the regulation of ionic balance and cell volume. This Manduca sexta (Tobacco hawkmoth) protein is Bumetanide-sensitive sodium-(potassium)-chloride cotransporter.